The sequence spans 742 residues: Phosphoribosylformylglycinamidine synthase subunit PurL (742 aa).

His53 is a catalytic residue. Positions 56 and 95 each coordinate ATP. Residue Glu97 coordinates Mg(2+). Residues 98–101 (SHNH) and Arg120 contribute to the substrate site. The active-site Proton acceptor is the His99. Position 121 (Asp121) interacts with Mg(2+). Position 244 (Gln244) interacts with substrate. Residue Asp274 participates in Mg(2+) binding. 318–320 (ESQ) contributes to the substrate binding site. ATP contacts are provided by Asp501 and Gly538. Asn539 is a binding site for Mg(2+). Ser541 is a substrate binding site.

This sequence belongs to the FGAMS family. As to quaternary structure, monomer. Part of the FGAM synthase complex composed of 1 PurL, 1 PurQ and 2 PurS subunits.

It localises to the cytoplasm. The enzyme catalyses N(2)-formyl-N(1)-(5-phospho-beta-D-ribosyl)glycinamide + L-glutamine + ATP + H2O = 2-formamido-N(1)-(5-O-phospho-beta-D-ribosyl)acetamidine + L-glutamate + ADP + phosphate + H(+). It participates in purine metabolism; IMP biosynthesis via de novo pathway; 5-amino-1-(5-phospho-D-ribosyl)imidazole from N(2)-formyl-N(1)-(5-phospho-D-ribosyl)glycinamide: step 1/2. Its function is as follows. Part of the phosphoribosylformylglycinamidine synthase complex involved in the purines biosynthetic pathway. Catalyzes the ATP-dependent conversion of formylglycinamide ribonucleotide (FGAR) and glutamine to yield formylglycinamidine ribonucleotide (FGAM) and glutamate. The FGAM synthase complex is composed of three subunits. PurQ produces an ammonia molecule by converting glutamine to glutamate. PurL transfers the ammonia molecule to FGAR to form FGAM in an ATP-dependent manner. PurS interacts with PurQ and PurL and is thought to assist in the transfer of the ammonia molecule from PurQ to PurL. The protein is Phosphoribosylformylglycinamidine synthase subunit PurL of Limosilactobacillus reuteri (strain DSM 20016) (Lactobacillus reuteri).